The chain runs to 643 residues: Mitochondrial Rho GTPase 2 (643 aa).

The Cytoplasmic segment spans residues 1-611 (MMLGGKSSAG…SGRRSRNIRQ (611 aa)). The Miro 1 domain maps to 12 to 179 (RTSLRVAVAG…FYFASKAVLH (168 aa)). 2 EF-hand domains span residues 195–230 (RLRRAVQRIFNLCDHDLDGALNDAELNDFQVNCFGA) and 315–350 (EAMDFLSGIFQLYDLDNDGALQPAELDDLFQTAPDS). Ca(2+)-binding residues include D208, D210, D212, E219, D328, D330, D332, and E339. Positions 423–592 (RNVFQCFVFG…FSRIVSTAEN (170 aa)) constitute a Miro 2 domain. Residues 612-632 (LVNSSLLFVSVGTAVGFAGLA) form a helical membrane-spanning segment. At 633–643 (AYRAYSARKNA) the chain is on the mitochondrial intermembrane side.

The protein belongs to the mitochondrial Rho GTPase family. In terms of tissue distribution, expressed roots, rosette and cauline leaves, stems, flowers and siliques.

The protein resides in the mitochondrion outer membrane. With respect to regulation, activated by calcium. In terms of biological role, calcium-binding mitochondrial GTPase involved in calcium signaling during salt stress response. May play a role in the progression of embryonic cell division, development of haploid male and female gametes, and pollen tube growth. The sequence is that of Mitochondrial Rho GTPase 2 from Arabidopsis thaliana (Mouse-ear cress).